The chain runs to 150 residues: Endoribonuclease YbeY (150 aa).

The Zn(2+) site is built by H112, H116, and H122.

The protein belongs to the endoribonuclease YbeY family. Zn(2+) is required as a cofactor.

Its subcellular location is the cytoplasm. Functionally, single strand-specific metallo-endoribonuclease involved in late-stage 70S ribosome quality control and in maturation of the 3' terminus of the 16S rRNA. This is Endoribonuclease YbeY from Geobacter metallireducens (strain ATCC 53774 / DSM 7210 / GS-15).